The primary structure comprises 399 residues: MSQYHTFTAHDAVAYAQQFAGIDNPSELVSAQEVGDGNLNLVFKVFDRQGVSRAIVKQALPYVRCVGESWPLTLDRARLEAQTLVAHYQHSPQHTVKIHHFDPELAVMVMEDLSDHRIWRGELIANVYYPQAARQLGDYLAQVLFHTSDFYLHPHEKKAQVAQFSNPAMCEITEDLFFNDPYQIHERNNYPAELETDVAALRDDAQLKLAVAALKHRFFAHAEALLHGDIHSGSIFVAEGSLKAIDAEFGYFGPIGFDIGTAIGNLLLNYCGLPGQLGIRDAAAAREQRLNDIHQLWTTFAERFQALAAEKTRDAALAYPGYASAFLKKVWADAVGFCGSELIRRSVGLSHVADIDTIQDDAMRHECLRHAITLGKALIVLAERIDSVDELLARVRQYS.

ATP contacts are provided by residues Asn40, Lys57, and 111 to 113; that span reads EDL. Asp229 serves as a coordination point for substrate. 246–248 is a binding site for ATP; sequence DAE. Arg344 lines the substrate pocket.

It belongs to the methylthioribose kinase family. As to quaternary structure, homodimer.

It catalyses the reaction 5-(methylsulfanyl)-D-ribose + ATP = 5-(methylsulfanyl)-alpha-D-ribose 1-phosphate + ADP + H(+). The protein operates within amino-acid biosynthesis; L-methionine biosynthesis via salvage pathway; S-methyl-5-thio-alpha-D-ribose 1-phosphate from S-methyl-5'-thioadenosine (hydrolase route): step 2/2. Its function is as follows. Catalyzes the phosphorylation of methylthioribose into methylthioribose-1-phosphate. The polypeptide is Methylthioribose kinase (Klebsiella pneumoniae (strain 342)).